We begin with the raw amino-acid sequence, 316 residues long: Acetyl-coenzyme A carboxylase carboxyl transferase subunit alpha (316 aa).

Positions 36 to 290 (PLRTQLETLR…GSVISRHLDD (255 aa)) constitute a CoA carboxyltransferase C-terminal domain.

This sequence belongs to the AccA family. Acetyl-CoA carboxylase is a heterohexamer composed of biotin carboxyl carrier protein (AccB), biotin carboxylase (AccC) and two subunits each of ACCase subunit alpha (AccA) and ACCase subunit beta (AccD).

The protein resides in the cytoplasm. It catalyses the reaction N(6)-carboxybiotinyl-L-lysyl-[protein] + acetyl-CoA = N(6)-biotinyl-L-lysyl-[protein] + malonyl-CoA. It participates in lipid metabolism; malonyl-CoA biosynthesis; malonyl-CoA from acetyl-CoA: step 1/1. Component of the acetyl coenzyme A carboxylase (ACC) complex. First, biotin carboxylase catalyzes the carboxylation of biotin on its carrier protein (BCCP) and then the CO(2) group is transferred by the carboxyltransferase to acetyl-CoA to form malonyl-CoA. The chain is Acetyl-coenzyme A carboxylase carboxyl transferase subunit alpha from Deinococcus radiodurans (strain ATCC 13939 / DSM 20539 / JCM 16871 / CCUG 27074 / LMG 4051 / NBRC 15346 / NCIMB 9279 / VKM B-1422 / R1).